Consider the following 620-residue polypeptide: 1-deoxy-D-xylulose-5-phosphate synthase (620 aa).

Thiamine diphosphate is bound by residues His-80 and 121-123; that span reads GHS. Asp-152 serves as a coordination point for Mg(2+). Thiamine diphosphate is bound by residues 153–154, Asn-181, Tyr-288, and Glu-370; that span reads GA. Asn-181 lines the Mg(2+) pocket.

Belongs to the transketolase family. DXPS subfamily. In terms of assembly, homodimer. Mg(2+) is required as a cofactor. Requires thiamine diphosphate as cofactor.

The catalysed reaction is D-glyceraldehyde 3-phosphate + pyruvate + H(+) = 1-deoxy-D-xylulose 5-phosphate + CO2. The protein operates within metabolic intermediate biosynthesis; 1-deoxy-D-xylulose 5-phosphate biosynthesis; 1-deoxy-D-xylulose 5-phosphate from D-glyceraldehyde 3-phosphate and pyruvate: step 1/1. Its function is as follows. Catalyzes the acyloin condensation reaction between C atoms 2 and 3 of pyruvate and glyceraldehyde 3-phosphate to yield 1-deoxy-D-xylulose-5-phosphate (DXP). This is 1-deoxy-D-xylulose-5-phosphate synthase from Cronobacter sakazakii (strain ATCC BAA-894) (Enterobacter sakazakii).